The primary structure comprises 390 residues: Protein MalY (390 aa).

At Lys233 the chain carries N6-(pyridoxal phosphate)lysine.

Belongs to the class-II pyridoxal-phosphate-dependent aminotransferase family. MalY/PatB cystathionine beta-lyase subfamily. Homodimer. Interacts with MalT. Pyridoxal 5'-phosphate serves as cofactor.

It carries out the reaction L,L-cystathionine + H2O = L-homocysteine + pyruvate + NH4(+). The enzyme catalyses an S-substituted L-cysteine + H2O = a thiol + pyruvate + NH4(+). In terms of biological role, acts as a beta-cystathionase and as a repressor of the maltose regulon. In Escherichia coli (strain K12), this protein is Protein MalY (malY).